The following is a 420-amino-acid chain: 3-isopropylmalate dehydratase large subunit (420 aa).

[4Fe-4S] cluster is bound by residues Cys-300, Cys-360, and Cys-363.

Belongs to the aconitase/IPM isomerase family. LeuC type 2 subfamily. Heterodimer of LeuC and LeuD. The cofactor is [4Fe-4S] cluster.

The enzyme catalyses (2R,3S)-3-isopropylmalate = (2S)-2-isopropylmalate. It participates in amino-acid biosynthesis; L-leucine biosynthesis; L-leucine from 3-methyl-2-oxobutanoate: step 2/4. Catalyzes the isomerization between 2-isopropylmalate and 3-isopropylmalate, via the formation of 2-isopropylmaleate. This chain is 3-isopropylmalate dehydratase large subunit, found in Halothermothrix orenii (strain H 168 / OCM 544 / DSM 9562).